A 223-amino-acid polypeptide reads, in one-letter code: Interleukin-12 subunit alpha (223 aa).

Residues 1 to 23 (MCPSARSLLLLASLVLLEHLGSA) form the signal peptide. N-linked (GlcNAc...) asparagine glycans are attached at residues asparagine 41, asparagine 79, asparagine 121, and asparagine 176. Intrachain disulfides connect cysteine 66–cysteine 200 and cysteine 87–cysteine 125.

The protein belongs to the IL-6 superfamily. In terms of assembly, heterodimer with IL12B; disulfide-linked. This heterodimer is known as interleukin IL-12. Heterodimer with EBI3/IL27B; not disulfide-linked. This heterodimer is known as interleukin IL-35. Interacts with NBR1; this interaction promotes IL-12 secretion.

The protein localises to the secreted. Functionally, heterodimerizes with IL12B to form the IL-12 cytokine or with EBI3/IL27B to form the IL-35 cytokine. IL-12 is primarily produced by professional antigen-presenting cells (APCs) such as B-cells and dendritic cells (DCs) as well as macrophages and granulocytes and regulates T-cell and natural killer-cell responses, induces the production of interferon-gamma (IFN-gamma), favors the differentiation of T-helper 1 (Th1) cells and is an important link between innate resistance and adaptive immunity. Mechanistically, exerts its biological effects through a receptor composed of IL12R1 and IL12R2 subunits. Binding to the receptor results in the rapid tyrosine phosphorylation of a number of cellular substrates including the JAK family kinases TYK2 and JAK2. In turn, recruited STAT4 gets phosphorylated and translocates to the nucleus where it regulates cytokine/growth factor responsive genes. As part of IL-35, plays essential roles in maintaining the immune homeostasis of the liver microenvironment and also functions as an immune-suppressive cytokine. Mediates biological events through unconventional receptors composed of IL12RB2 and gp130/IL6ST heterodimers or homodimers. Signaling requires the transcription factors STAT1 and STAT4, which form a unique heterodimer that binds to distinct DNA sites. This is Interleukin-12 subunit alpha (IL12A) from Marmota monax (Woodchuck).